Consider the following 1272-residue polypeptide: Regulator of nonsense transcripts 2 (1272 aa).

Residues 1–114 (MPAERKKPAS…QEEQAKRQQE (114 aa)) are compositionally biased toward basic and acidic residues. Disordered stretches follow at residues 1–126 (MPAE…EKEE), 370–389 (DHRELQNTERQNRRILHSKG), 423–445 (NMPDLPQDKPTPEEHGPGIDIFT), and 490–517 (CQNKESNKDDTKEAKESKENKEVSSPDD). A coiled-coil region spans residues 54–134 (EDKKKRLEDD…EESIQLHQEA (81 aa)). The segment at 94 to 133 (KKKHQEEERKKQEEQAKRQQEEEAAAQMKEKEESIQLHQE) is sufficient for interaction with UPF1. Residues 168–431 (LKKNTAFVKK…ENMPDLPQDK (264 aa)) form the MIF4G 1 domain. Basic and acidic residues-rich tracts occupy residues 428–439 (PQDKPTPEEHGP) and 490–513 (CQNKESNKDDTKEAKESKENKEVS). The stretch at 487-559 (EKSCQNKESN…EQEQEDEEAS (73 aa)) forms a coiled coil. 2 consecutive MIF4G domains span residues 569-758 (DAFL…CNPP) and 773-986 (EYVR…LRPK). The segment at 711-928 (GRFLFRSPES…IRLVCTILDT (218 aa)) is sufficient for interaction with UPF3A and UPF3B. A sufficient for interaction with EIF4A1 and EIF1 region spans residues 757-1272 (PPPAEKTVKK…LIFKTGGRRR (516 aa)). Residues 839 to 859 (EDVGIHVVDGVLEDIRLGMEV) form a binds to UPF3B region. The segment at 1018–1098 (DSKDSMTEGE…DEENTEVMIK (81 aa)) is disordered. A compositionally biased stretch (acidic residues) spans 1027-1076 (ENLEEDEEEEEGGAETEEQSGNESEVNEPEEEEGSDNDDDEGEEEEEENT). Positions 1084 to 1272 (KENETDEENT…LIFKTGGRRR (189 aa)) are sufficient for interaction with UPF1 C-terminus. The residue at position 1088 (Thr1088) is a Phosphothreonine. Interaction with UPF1 stretches follow at residues 1105 to 1129 (VPCVEDEDFIQALDKMMLENLQQRS) and 1167 to 1207 (DTMP…AEQE). The segment at 1105–1198 (VPCVEDEDFI…PMSSQLAANH (94 aa)) is necessary for interaction with UPF1. Residues 1220–1272 (NERQEQEDYQEMLQSLAQRPAPANTNRERRPRYQHPKGAPNADLIFKTGGRRR) are disordered.

In terms of assembly, found in a post-splicing messenger ribonucleoprotein (mRNP) complex. Associates with the exon junction complex (EJC). Interacts with SMG1, EST1A, UPF1, UPF3A, UPF3B, EIF4A1 and EIF1. In terms of tissue distribution, ubiquitous.

Its subcellular location is the cytoplasm. It is found in the perinuclear region. Functionally, involved in nonsense-mediated decay (NMD) of mRNAs containing premature stop codons by associating with the nuclear exon junction complex (EJC). Recruited by UPF3B associated with the EJC core at the cytoplasmic side of the nuclear envelope and the subsequent formation of an UPF1-UPF2-UPF3 surveillance complex (including UPF1 bound to release factors at the stalled ribosome) is believed to activate NMD. In cooperation with UPF3B stimulates both ATPase and RNA helicase activities of UPF1. Binds spliced mRNA. The chain is Regulator of nonsense transcripts 2 from Homo sapiens (Human).